The following is a 230-amino-acid chain: Thymidylate synthase 1 (230 aa).

Arg92 to Arg93 contacts dUMP. Cys112 acts as the Nucleophile in catalysis. DUMP is bound by residues Arg132–Asp135, Asn143, and His173–Tyr175. Position 135 (Asp135) interacts with (6R)-5,10-methylene-5,6,7,8-tetrahydrofolate.

This sequence belongs to the thymidylate synthase family. Bacterial-type ThyA subfamily. In terms of assembly, homodimer.

The protein resides in the cytoplasm. It carries out the reaction dUMP + (6R)-5,10-methylene-5,6,7,8-tetrahydrofolate = 7,8-dihydrofolate + dTMP. It functions in the pathway pyrimidine metabolism; dTTP biosynthesis. Functionally, catalyzes the reductive methylation of 2'-deoxyuridine-5'-monophosphate (dUMP) to 2'-deoxythymidine-5'-monophosphate (dTMP) while utilizing 5,10-methylenetetrahydrofolate (mTHF) as the methyl donor and reductant in the reaction, yielding dihydrofolate (DHF) as a by-product. This enzymatic reaction provides an intracellular de novo source of dTMP, an essential precursor for DNA biosynthesis. This Bacillus amyloliquefaciens (Bacillus velezensis) protein is Thymidylate synthase 1.